Reading from the N-terminus, the 260-residue chain is Cytosolic Fe-S cluster assembly factor Nubp2 homolog (260 aa).

An ATP-binding site is contributed by Gly-14–Ser-21. [4Fe-4S] cluster-binding residues include Cys-188 and Cys-191.

The protein belongs to the Mrp/NBP35 ATP-binding proteins family. NUBP2/CFD1 subfamily. Heterotetramer of 2 Nubp1 and 2 Nubp2 chains. It depends on [4Fe-4S] cluster as a cofactor.

The protein localises to the cytoplasm. Functionally, component of the cytosolic iron-sulfur (Fe/S) protein assembly (CIA) machinery. Required for maturation of extramitochondrial Fe-S proteins. The Nubp1-Nubp2 heterotetramer forms a Fe-S scaffold complex, mediating the de novo assembly of an Fe-S cluster and its transfer to target apoproteins. The chain is Cytosolic Fe-S cluster assembly factor Nubp2 homolog from Drosophila erecta (Fruit fly).